The sequence spans 613 residues: Probable indole-3-acetic acid-amido synthetase GH3.12 (613 aa).

It belongs to the IAA-amido conjugating enzyme family. As to expression, expressed in roots.

In terms of biological role, may catalyze the synthesis of indole-3-acetic acid (IAA)-amino acid conjugates, providing a mechanism for the plant to cope with the presence of excess auxin. In Oryza sativa subsp. japonica (Rice), this protein is Probable indole-3-acetic acid-amido synthetase GH3.12 (GH3.12).